The following is a 105-amino-acid chain: Small ribosomal subunit protein eS24 (105 aa).

Belongs to the eukaryotic ribosomal protein eS24 family.

This Haloquadratum walsbyi (strain DSM 16790 / HBSQ001) protein is Small ribosomal subunit protein eS24.